The sequence spans 272 residues: Large ribosomal subunit protein uL2cz/uL2cy (272 aa).

The span at 1–13 (MHLYKTSTPSTRN) shows a compositional bias: polar residues. Disordered regions lie at residues 1–27 (MHLY…PRNN) and 222–272 (NPVD…RRSK).

The protein belongs to the universal ribosomal protein uL2 family. In terms of assembly, part of the 50S ribosomal subunit.

It localises to the plastid. The protein resides in the chloroplast. The chain is Large ribosomal subunit protein uL2cz/uL2cy (rpl2-A) from Buxus microphylla (Littleleaf boxwood).